Here is a 415-residue protein sequence, read N- to C-terminus: Tyrosine--tRNA ligase (415 aa).

The 'HIGH' region signature appears at 54-63 (PTGSNIHLGH). The 'KMSKS' region motif lies at 248-252 (KMSKS). ATP is bound at residue Lys-251. Positions 351-414 (AKAFYLFSAV…LGKKTFRRLV (64 aa)) constitute an S4 RNA-binding domain.

This sequence belongs to the class-I aminoacyl-tRNA synthetase family. TyrS type 2 subfamily. In terms of assembly, homodimer.

The protein resides in the cytoplasm. It carries out the reaction tRNA(Tyr) + L-tyrosine + ATP = L-tyrosyl-tRNA(Tyr) + AMP + diphosphate + H(+). Its function is as follows. Catalyzes the attachment of tyrosine to tRNA(Tyr) in a two-step reaction: tyrosine is first activated by ATP to form Tyr-AMP and then transferred to the acceptor end of tRNA(Tyr). The chain is Tyrosine--tRNA ligase from Synechococcus sp. (strain CC9605).